Here is a 219-residue protein sequence, read N- to C-terminus: Lipoprotein-releasing system ATP-binding protein LolD (219 aa).

One can recognise an ABC transporter domain in the interval 5–219 (LKAGDIFKTY…KVVMQDGVII (215 aa)). ATP is bound at residue 37-44 (GASGAGKS).

The protein belongs to the ABC transporter superfamily. Lipoprotein translocase (TC 3.A.1.125) family. In terms of assembly, the complex is composed of two ATP-binding proteins (LolD) and two transmembrane proteins (LolC and LolE).

Its subcellular location is the cell inner membrane. Part of the ABC transporter complex LolCDE involved in the translocation of mature outer membrane-directed lipoproteins, from the inner membrane to the periplasmic chaperone, LolA. Responsible for the formation of the LolA-lipoprotein complex in an ATP-dependent manner. The polypeptide is Lipoprotein-releasing system ATP-binding protein LolD (Cytophaga hutchinsonii (strain ATCC 33406 / DSM 1761 / CIP 103989 / NBRC 15051 / NCIMB 9469 / D465)).